The chain runs to 558 residues: Urocanate hydratase (558 aa).

Residues 50–51, Gln-128, 174–176, Glu-194, Arg-199, 240–241, 261–265, 271–272, and Tyr-320 contribute to the NAD(+) site; these read GG, GMG, NA, QTSAH, and YI. Cys-408 is a catalytic residue. Residue Gly-490 coordinates NAD(+).

It belongs to the urocanase family. NAD(+) serves as cofactor.

Its subcellular location is the cytoplasm. The catalysed reaction is 4-imidazolone-5-propanoate = trans-urocanate + H2O. The protein operates within amino-acid degradation; L-histidine degradation into L-glutamate; N-formimidoyl-L-glutamate from L-histidine: step 2/3. Functionally, catalyzes the conversion of urocanate to 4-imidazolone-5-propionate. This chain is Urocanate hydratase, found in Deinococcus radiodurans (strain ATCC 13939 / DSM 20539 / JCM 16871 / CCUG 27074 / LMG 4051 / NBRC 15346 / NCIMB 9279 / VKM B-1422 / R1).